A 356-amino-acid polypeptide reads, in one-letter code: S-adenosylmethionine:tRNA ribosyltransferase-isomerase (356 aa).

The protein belongs to the QueA family. In terms of assembly, monomer.

It localises to the cytoplasm. The catalysed reaction is 7-aminomethyl-7-carbaguanosine(34) in tRNA + S-adenosyl-L-methionine = epoxyqueuosine(34) in tRNA + adenine + L-methionine + 2 H(+). Its pathway is tRNA modification; tRNA-queuosine biosynthesis. Functionally, transfers and isomerizes the ribose moiety from AdoMet to the 7-aminomethyl group of 7-deazaguanine (preQ1-tRNA) to give epoxyqueuosine (oQ-tRNA). This Escherichia coli O81 (strain ED1a) protein is S-adenosylmethionine:tRNA ribosyltransferase-isomerase.